The following is a 155-amino-acid chain: Basic phospholipase A2 PC1 (155 aa).

Residues 1–21 (MYPAHLLVLLAVCVSLLGASA) form the signal peptide. Positions 22–27 (ISNRPR) are excised as a propeptide. Intrachain disulfides connect Cys38–Cys98, Cys54–Cys144, Cys56–Cys72, Cys71–Cys125, Cys78–Cys118, Cys87–Cys111, and Cys105–Cys116. Positions 55, 57, and 59 each coordinate Ca(2+). The active site involves His75. Ca(2+) is bound at residue Asp76. The active site involves Asp119.

It belongs to the phospholipase A2 family. Group I subfamily. D49 sub-subfamily. The cofactor is Ca(2+). Expressed by the venom gland.

It is found in the secreted. It catalyses the reaction a 1,2-diacyl-sn-glycero-3-phosphocholine + H2O = a 1-acyl-sn-glycero-3-phosphocholine + a fatty acid + H(+). Its function is as follows. Snake venom phospholipase A2 (PLA2) that inhibits neuromuscular transmission by blocking acetylcholine release from the nerve termini. PLA2 catalyzes the calcium-dependent hydrolysis of the 2-acyl groups in 3-sn-phosphoglycerides. The polypeptide is Basic phospholipase A2 PC1 (Laticauda colubrina (Yellow-lipped sea krait)).